Consider the following 489-residue polypeptide: MEKSWFNLMFSKGELEYRGELSKAMDSFAPIEKTTISKDRFIYDMDKNFYGWGERSSYYNNVDLLVNSKDIRNFISDDTFFVRDSNKNSYSIYFDIEKKKFEINNDLSDLEIFFYSYCSSSYLNNRSKGDNDLHYDPYIKDTKYNCNNHINSCIDSYFRSHICINSHFLSDSNNSNESYIYNFICSESGSGKIRESKNDKIRTNSNRNNLMSSKDFDITKNYNQLWIQCDNCYGLKYKKVEMNVCEECGHYLKMTSSERIELLIDPGSWNGMDEDMVSADPIKFHSREEPYKKRIASAQKKTGLTDAIQTGTGQLNGIPVALGVMDFQFMGGSMGSVVGDKITRLIEYATNQCLPLILVCSSGGARMQEGSLSLMQMAKISSVLCDYQSSKKLFYISILTSPTTGGVTASLGMLGDIIIAEPYAYIAFAGKRVIEQTLKKAVPEGSQAAESLLRKGLLDAIVPRNPLKGVVSELFQLHAFFPLNKNEIK.

The CoA carboxyltransferase N-terminal domain occupies 225–489 (LWIQCDNCYG…FFPLNKNEIK (265 aa)). Residues Cys229, Cys232, Cys245, and Cys248 each contribute to the Zn(2+) site. The segment at 229-248 (CDNCYGLKYKKVEMNVCEEC) adopts a C4-type zinc-finger fold.

It belongs to the AccD/PCCB family. As to quaternary structure, acetyl-CoA carboxylase is a heterohexamer composed of biotin carboxyl carrier protein, biotin carboxylase and 2 subunits each of ACCase subunit alpha and ACCase plastid-coded subunit beta (accD). It depends on Zn(2+) as a cofactor.

It localises to the plastid. The protein localises to the chloroplast stroma. The enzyme catalyses N(6)-carboxybiotinyl-L-lysyl-[protein] + acetyl-CoA = N(6)-biotinyl-L-lysyl-[protein] + malonyl-CoA. Its pathway is lipid metabolism; malonyl-CoA biosynthesis; malonyl-CoA from acetyl-CoA: step 1/1. Its function is as follows. Component of the acetyl coenzyme A carboxylase (ACC) complex. Biotin carboxylase (BC) catalyzes the carboxylation of biotin on its carrier protein (BCCP) and then the CO(2) group is transferred by the transcarboxylase to acetyl-CoA to form malonyl-CoA. This Brassica napus (Rape) protein is Acetyl-coenzyme A carboxylase carboxyl transferase subunit beta, chloroplastic.